The sequence spans 652 residues: Carboxypeptidase S1 homolog A (652 aa).

Residues 1 to 19 (MRFAASIAVALPVIHAASA) form the signal peptide. A disulfide bridge links C50 with C121. N-linked (GlcNAc...) asparagine glycosylation is found at N77, N132, N161, N168, N184, and N202. S238 is a catalytic residue. N-linked (GlcNAc...) asparagine glycans are attached at residues N260, N299, N347, and N410. 2 cysteine pairs are disulfide-bonded: C325–C361 and C332–C354. Residue D458 is part of the active site. Residue C461 coordinates substrate. N-linked (GlcNAc...) asparagine glycosylation is found at N474, N492, and N505. Residue H516 is part of the active site. Substrate is bound at residue E517. The disordered stretch occupies residues 608–627 (AASKGNPPPTTTSSPTAAPT). Low complexity predominate over residues 618-627 (TTSSPTAAPT). Residue G629 is the site of GPI-anchor amidated glycine attachment. A propeptide spans 630–652 (SAMLKAPVAMLAISALTVLAFFL) (removed in mature form).

It belongs to the peptidase S10 family.

The protein localises to the cell membrane. The enzyme catalyses Preferential release of a C-terminal arginine or lysine residue.. Its function is as follows. Extracellular serine carboxypeptidase that contributes to pathogenicity. The protein is Carboxypeptidase S1 homolog A (SCPA) of Trichophyton rubrum (Athlete's foot fungus).